A 272-amino-acid polypeptide reads, in one-letter code: Shikimate dehydrogenase (NADP(+)) (272 aa).

Residues 19–21 (SLS) and T66 contribute to the shikimate site. K70 functions as the Proton acceptor in the catalytic mechanism. E82 serves as a coordination point for NADP(+). Shikimate is bound by residues N91 and D106. Residues 129–133 (GAGGA), 151–156 (NRTPEK), and I214 contribute to the NADP(+) site. Y216 serves as a coordination point for shikimate. Position 237 (G237) interacts with NADP(+).

This sequence belongs to the shikimate dehydrogenase family. Homodimer.

It carries out the reaction shikimate + NADP(+) = 3-dehydroshikimate + NADPH + H(+). It participates in metabolic intermediate biosynthesis; chorismate biosynthesis; chorismate from D-erythrose 4-phosphate and phosphoenolpyruvate: step 4/7. In terms of biological role, involved in the biosynthesis of the chorismate, which leads to the biosynthesis of aromatic amino acids. Catalyzes the reversible NADPH linked reduction of 3-dehydroshikimate (DHSA) to yield shikimate (SA). This is Shikimate dehydrogenase (NADP(+)) from Thermococcus kodakarensis (strain ATCC BAA-918 / JCM 12380 / KOD1) (Pyrococcus kodakaraensis (strain KOD1)).